The sequence spans 338 residues: Lipoate-protein ligase A (338 aa).

The BPL/LPL catalytic domain maps to 29-216 (SPNQRVLFLW…AFFAYYDEQV (188 aa)). ATP contacts are provided by residues Arg71, 76-79 (GAVF), and Lys134. A (R)-lipoate-binding site is contributed by Lys134.

It belongs to the LplA family. As to quaternary structure, monomer.

The protein resides in the cytoplasm. The enzyme catalyses L-lysyl-[lipoyl-carrier protein] + (R)-lipoate + ATP = N(6)-[(R)-lipoyl]-L-lysyl-[lipoyl-carrier protein] + AMP + diphosphate + H(+). It functions in the pathway protein modification; protein lipoylation via exogenous pathway; protein N(6)-(lipoyl)lysine from lipoate: step 1/2. Its pathway is protein modification; protein lipoylation via exogenous pathway; protein N(6)-(lipoyl)lysine from lipoate: step 2/2. Catalyzes both the ATP-dependent activation of exogenously supplied lipoate to lipoyl-AMP and the transfer of the activated lipoyl onto the lipoyl domains of lipoate-dependent enzymes. The chain is Lipoate-protein ligase A from Yersinia pseudotuberculosis serotype O:1b (strain IP 31758).